Here is a 20-residue protein sequence, read N- to C-terminus: Sperm acrosome membrane-associated protein 3, processed form (20 aa).

The protein belongs to the glycosyl hydrolase 22 family.

In terms of biological role, sperm surface membrane protein that may be involved in sperm-egg plasma membrane adhesion and fusion during fertilization. It could be a potential receptor for the egg oligosaccharide residue N-acetylglucosamine, which is present in the extracellular matrix over the egg plasma membrane. This chain is Sperm acrosome membrane-associated protein 3, processed form (SPACA3), found in Vulpes vulpes (Red fox).